A 309-amino-acid chain; its full sequence is Homoserine O-succinyltransferase (309 aa).

The active-site Acyl-thioester intermediate is cysteine 142. 2 residues coordinate substrate: lysine 163 and serine 192. The Proton acceptor role is filled by histidine 235. Residue glutamate 237 is part of the active site. Arginine 249 lines the substrate pocket.

This sequence belongs to the MetA family. In terms of assembly, homodimer.

It localises to the cytoplasm. The catalysed reaction is L-homoserine + succinyl-CoA = O-succinyl-L-homoserine + CoA. It functions in the pathway amino-acid biosynthesis; L-methionine biosynthesis via de novo pathway; O-succinyl-L-homoserine from L-homoserine: step 1/1. Its function is as follows. Transfers a succinyl group from succinyl-CoA to L-homoserine, forming succinyl-L-homoserine. This is Homoserine O-succinyltransferase from Escherichia coli (strain K12 / MC4100 / BW2952).